The sequence spans 234 residues: Ubiquinone biosynthesis O-methyltransferase (234 aa).

S-adenosyl-L-methionine contacts are provided by R39, G59, D80, and M124.

Belongs to the methyltransferase superfamily. UbiG/COQ3 family.

It carries out the reaction a 3-demethylubiquinol + S-adenosyl-L-methionine = a ubiquinol + S-adenosyl-L-homocysteine + H(+). It catalyses the reaction a 3-(all-trans-polyprenyl)benzene-1,2-diol + S-adenosyl-L-methionine = a 2-methoxy-6-(all-trans-polyprenyl)phenol + S-adenosyl-L-homocysteine + H(+). It participates in cofactor biosynthesis; ubiquinone biosynthesis. Functionally, O-methyltransferase that catalyzes the 2 O-methylation steps in the ubiquinone biosynthetic pathway. This chain is Ubiquinone biosynthesis O-methyltransferase, found in Aliivibrio fischeri (strain ATCC 700601 / ES114) (Vibrio fischeri).